The sequence spans 248 residues: Pyridoxine 5'-phosphate synthase (248 aa).

Asn-12 contacts 3-amino-2-oxopropyl phosphate. 14 to 15 contributes to the 1-deoxy-D-xylulose 5-phosphate binding site; the sequence is DH. Arg-23 serves as a coordination point for 3-amino-2-oxopropyl phosphate. His-48 functions as the Proton acceptor in the catalytic mechanism. 1-deoxy-D-xylulose 5-phosphate is bound by residues Arg-50 and His-55. Glu-75 (proton acceptor) is an active-site residue. 1-deoxy-D-xylulose 5-phosphate is bound at residue Thr-105. The active-site Proton donor is the His-199. 3-amino-2-oxopropyl phosphate contacts are provided by residues Gly-200 and 221-222; that span reads GH.

Belongs to the PNP synthase family. Homooctamer; tetramer of dimers.

The protein resides in the cytoplasm. The catalysed reaction is 3-amino-2-oxopropyl phosphate + 1-deoxy-D-xylulose 5-phosphate = pyridoxine 5'-phosphate + phosphate + 2 H2O + H(+). The protein operates within cofactor biosynthesis; pyridoxine 5'-phosphate biosynthesis; pyridoxine 5'-phosphate from D-erythrose 4-phosphate: step 5/5. Functionally, catalyzes the complicated ring closure reaction between the two acyclic compounds 1-deoxy-D-xylulose-5-phosphate (DXP) and 3-amino-2-oxopropyl phosphate (1-amino-acetone-3-phosphate or AAP) to form pyridoxine 5'-phosphate (PNP) and inorganic phosphate. The chain is Pyridoxine 5'-phosphate synthase from Jannaschia sp. (strain CCS1).